The sequence spans 138 residues: Large ribosomal subunit protein uL16 (138 aa).

The protein belongs to the universal ribosomal protein uL16 family. In terms of assembly, part of the 50S ribosomal subunit.

In terms of biological role, binds 23S rRNA and is also seen to make contacts with the A and possibly P site tRNAs. The sequence is that of Large ribosomal subunit protein uL16 from Ureaplasma urealyticum serovar 10 (strain ATCC 33699 / Western).